A 255-amino-acid polypeptide reads, in one-letter code: Isoprenyl transferase (255 aa).

Asp35 is an active-site residue. Asp35 contacts Mg(2+). Residues 36–39 (GNGR), Trp40, Arg48, His52, and 80–82 (STE) contribute to the substrate site. Asn83 (proton acceptor) is an active-site residue. Substrate contacts are provided by residues Trp84, Arg86, Arg203, and 209–211 (RIS). Glu222 provides a ligand contact to Mg(2+).

It belongs to the UPP synthase family. Homodimer. Mg(2+) is required as a cofactor.

In terms of biological role, catalyzes the condensation of isopentenyl diphosphate (IPP) with allylic pyrophosphates generating different type of terpenoids. This Clostridium tetani (strain Massachusetts / E88) protein is Isoprenyl transferase.